The primary structure comprises 320 residues: o-succinylbenzoate synthase (320 aa).

Residue lysine 133 is the Proton donor of the active site. 3 residues coordinate Mg(2+): aspartate 161, glutamate 190, and aspartate 213. Catalysis depends on lysine 235, which acts as the Proton acceptor.

The protein belongs to the mandelate racemase/muconate lactonizing enzyme family. MenC type 1 subfamily. It depends on a divalent metal cation as a cofactor.

It carries out the reaction (1R,6R)-6-hydroxy-2-succinyl-cyclohexa-2,4-diene-1-carboxylate = 2-succinylbenzoate + H2O. The protein operates within quinol/quinone metabolism; 1,4-dihydroxy-2-naphthoate biosynthesis; 1,4-dihydroxy-2-naphthoate from chorismate: step 4/7. It participates in quinol/quinone metabolism; menaquinone biosynthesis. Converts 2-succinyl-6-hydroxy-2,4-cyclohexadiene-1-carboxylate (SHCHC) to 2-succinylbenzoate (OSB). The chain is o-succinylbenzoate synthase from Salmonella heidelberg (strain SL476).